The sequence spans 24 residues: Citropin-3.1.2 (24 aa).

Expressed by the dorsal and submental skin glands.

The protein resides in the secreted. This is Citropin-3.1.2 from Ranoidea citropa (Australian Blue Mountains tree frog).